A 128-amino-acid chain; its full sequence is MARLAGVDLPPGKRAEIGLTYIYGIGRTRSKSLLHRAGIDFDKKIRDLTEDEINKVRTILEEEGAVEGDLRKEISMNIKRHIEMGSYRGLRHRRSLPVRGQRTHTNARTRKGPRRGTVANKKKATGKT.

The tract at residues 85 to 128 (GSYRGLRHRRSLPVRGQRTHTNARTRKGPRRGTVANKKKATGKT) is disordered. Over residues 89-128 (GLRHRRSLPVRGQRTHTNARTRKGPRRGTVANKKKATGKT) the composition is skewed to basic residues.

It belongs to the universal ribosomal protein uS13 family. Part of the 30S ribosomal subunit. Forms a loose heterodimer with protein S19. Forms two bridges to the 50S subunit in the 70S ribosome.

In terms of biological role, located at the top of the head of the 30S subunit, it contacts several helices of the 16S rRNA. In the 70S ribosome it contacts the 23S rRNA (bridge B1a) and protein L5 of the 50S subunit (bridge B1b), connecting the 2 subunits; these bridges are implicated in subunit movement. Contacts the tRNAs in the A and P-sites. This chain is Small ribosomal subunit protein uS13, found in Solibacter usitatus (strain Ellin6076).